A 325-amino-acid polypeptide reads, in one-letter code: 1-aminocyclopropane-1-carboxylate oxidase 2 (325 aa).

Residues 157–257 form the Fe2OG dioxygenase domain; the sequence is PTFGTKVSNY…RMSIASFYNP (101 aa). His-181, Asp-183, and His-238 together coordinate Fe cation.

The protein belongs to the iron/ascorbate-dependent oxidoreductase family. Fe cation serves as cofactor.

It catalyses the reaction 1-aminocyclopropane-1-carboxylate + L-ascorbate + O2 = ethene + L-dehydroascorbate + hydrogen cyanide + CO2 + 2 H2O. The protein operates within alkene biosynthesis; ethylene biosynthesis via S-adenosyl-L-methionine; ethylene from S-adenosyl-L-methionine: step 2/2. In Doritaenopsis sp. (Moth orchid), this protein is 1-aminocyclopropane-1-carboxylate oxidase 2 (ACO2).